We begin with the raw amino-acid sequence, 75 residues long: Endogenous retrovirus group K member 7 Np9 protein (75 aa).

Positions 24–43 (PKRQRPSRTGHDDDGGFVEK) are disordered. The span at 32-43 (TGHDDDGGFVEK) shows a compositional bias: basic and acidic residues.

It is found in the nucleus. Its function is as follows. May possess a function in tumorigenesis. This chain is Endogenous retrovirus group K member 7 Np9 protein (ERVK-7), found in Homo sapiens (Human).